The sequence spans 337 residues: Histidine N-acetyltransferase (337 aa).

The propeptide at 1–2 (MK) is removed in mature form. The region spanning 21-156 (LQFAVATEED…QGILLVRFRA (136 aa)) is the N-acetyltransferase domain.

The enzyme catalyses L-histidine + acetyl-CoA = N(alpha)-acetyl-L-histidine + CoA + H(+). In terms of biological role, enzyme responsible for the N-acetyl-histidine (NAH) synthesis, which is a major constituent of brain and lens of ectothermic vertebrates. The sequence is that of Histidine N-acetyltransferase (hisat) from Scomber australasicus (Blue mackerel).